Reading from the N-terminus, the 78-residue chain is ATP synthase subunit a (78 aa).

A helical membrane pass occupies residues 34 to 54; it reads LTNIGLYLTIGIFLILTYSLL.

It belongs to the ATPase A chain family. In terms of assembly, F-type ATPases have 2 components, CF(1) - the catalytic core - and CF(0) - the membrane proton channel. CF(1) has five subunits: alpha(3), beta(3), gamma(1), delta(1), epsilon(1). CF(0) has three main subunits: a, b and c.

Its subcellular location is the mitochondrion inner membrane. Functionally, mitochondrial membrane ATP synthase (F(1)F(0) ATP synthase or Complex V) produces ATP from ADP in the presence of a proton gradient across the membrane which is generated by electron transport complexes of the respiratory chain. F-type ATPases consist of two structural domains, F(1) - containing the extramembraneous catalytic core and F(0) - containing the membrane proton channel, linked together by a central stalk and a peripheral stalk. During catalysis, ATP synthesis in the catalytic domain of F(1) is coupled via a rotary mechanism of the central stalk subunits to proton translocation. Key component of the proton channel; it may play a direct role in the translocation of protons across the membrane. In Aspergillus amstelodami, this protein is ATP synthase subunit a (atp6).